The following is a 372-amino-acid chain: Queuine tRNA-ribosyltransferase (372 aa).

Residue Asp89 is the Proton acceptor of the active site. Residues 89 to 93 (DSGGF), Asp161, and Gly232 each bind substrate. Residues 262–268 (GIGDLPS) form an RNA binding region. Residue Asp281 is the Nucleophile of the active site. Residues 286–290 (TKAAR) form an RNA binding; important for wobble base 34 recognition region. Cys319, Cys321, Cys324, and His351 together coordinate Zn(2+).

Belongs to the queuine tRNA-ribosyltransferase family. In terms of assembly, homodimer. Within each dimer, one monomer is responsible for RNA recognition and catalysis, while the other monomer binds to the replacement base PreQ1. Requires Zn(2+) as cofactor.

The catalysed reaction is 7-aminomethyl-7-carbaguanine + guanosine(34) in tRNA = 7-aminomethyl-7-carbaguanosine(34) in tRNA + guanine. It participates in tRNA modification; tRNA-queuosine biosynthesis. In terms of biological role, catalyzes the base-exchange of a guanine (G) residue with the queuine precursor 7-aminomethyl-7-deazaguanine (PreQ1) at position 34 (anticodon wobble position) in tRNAs with GU(N) anticodons (tRNA-Asp, -Asn, -His and -Tyr). Catalysis occurs through a double-displacement mechanism. The nucleophile active site attacks the C1' of nucleotide 34 to detach the guanine base from the RNA, forming a covalent enzyme-RNA intermediate. The proton acceptor active site deprotonates the incoming PreQ1, allowing a nucleophilic attack on the C1' of the ribose to form the product. After dissociation, two additional enzymatic reactions on the tRNA convert PreQ1 to queuine (Q), resulting in the hypermodified nucleoside queuosine (7-(((4,5-cis-dihydroxy-2-cyclopenten-1-yl)amino)methyl)-7-deazaguanosine). The sequence is that of Queuine tRNA-ribosyltransferase from Chlamydia abortus (strain DSM 27085 / S26/3) (Chlamydophila abortus).